A 430-amino-acid chain; its full sequence is Histone acetyltransferase type B subunit 2 (430 aa).

5 WD repeats span residues 129–169 (PHDG…ALTT), 180–220 (GHTA…FTSS), 233–273 (RHTD…EEEA), 279–319 (AHSK…QRLH), and 323–363 (GHED…EEQT). The tract at residues 365–369 (EDAED) is interaction with the histone H4 N-terminus. Residues 380–420 (GHTNRISEFSWCPNERWVVGSLADDNILQIWSPSRVIWGRD) form a WD 6 repeat. Ser-425 is modified (phosphoserine).

This sequence belongs to the WD repeat RBAP46/RBAP48/MSI1 family. As to quaternary structure, component of the HAT-B complex composed of at least hat1 and hat2. The HAT-B complex binds to histone H4 tail. Component of the CENP-A recruiting complex composed of at least mis16, mis19, mis19 and mis20.

The protein resides in the cytoplasm. The protein localises to the nucleus. Its subcellular location is the chromosome. It localises to the centromere. It is found in the kinetochore. Regulatory subunit of the histone acetylase B (HAT-B) complex. The complex acetylates 'Lys-12' of histone H4 which is required for telomeric silencing. Component of the CENP-A recruiting complex that ensures the integrity of mitotic spindles through maintenance of kinetochore factors mis6/CENP-I and cnp1/CENP-A. Maintains the deacetylated state of histones specifically in the central core of the centromeres. This is Histone acetyltransferase type B subunit 2 (mis16) from Schizosaccharomyces pombe (strain 972 / ATCC 24843) (Fission yeast).